A 283-amino-acid polypeptide reads, in one-letter code: Bifunctional protein FolD (283 aa).

NADP(+) contacts are provided by residues 164 to 166, serine 189, and threonine 230; that span reads GRS.

It belongs to the tetrahydrofolate dehydrogenase/cyclohydrolase family. As to quaternary structure, homodimer.

It carries out the reaction (6R)-5,10-methylene-5,6,7,8-tetrahydrofolate + NADP(+) = (6R)-5,10-methenyltetrahydrofolate + NADPH. The enzyme catalyses (6R)-5,10-methenyltetrahydrofolate + H2O = (6R)-10-formyltetrahydrofolate + H(+). Its pathway is one-carbon metabolism; tetrahydrofolate interconversion. Functionally, catalyzes the oxidation of 5,10-methylenetetrahydrofolate to 5,10-methenyltetrahydrofolate and then the hydrolysis of 5,10-methenyltetrahydrofolate to 10-formyltetrahydrofolate. The polypeptide is Bifunctional protein FolD (Dictyoglomus thermophilum (strain ATCC 35947 / DSM 3960 / H-6-12)).